The following is a 101-amino-acid chain: Urease subunit beta (101 aa).

Belongs to the urease beta subunit family. As to quaternary structure, heterotrimer of UreA (gamma), UreB (beta) and UreC (alpha) subunits. Three heterotrimers associate to form the active enzyme.

The protein resides in the cytoplasm. It carries out the reaction urea + 2 H2O + H(+) = hydrogencarbonate + 2 NH4(+). It functions in the pathway nitrogen metabolism; urea degradation; CO(2) and NH(3) from urea (urease route): step 1/1. The polypeptide is Urease subunit beta (Burkholderia pseudomallei (strain 668)).